A 126-amino-acid polypeptide reads, in one-letter code: RxLR effector protein BLR31 (126 aa).

Positions 1 to 22 (MLLSRAISVLALLACIRCGVHA) are cleaved as a signal peptide. Residues 44–58 (RLLRTSVDFKDSEER) carry the RxLR-dEER motif.

The protein belongs to the RxLR effector family.

It localises to the secreted. The protein localises to the host cell. In terms of biological role, secreted effector that triggers a hypersensitive response (HR) in 3 Lactuca saligna accessions (CGN05947, CGN05310, CGN05304). This chain is RxLR effector protein BLR31, found in Bremia lactucae (Lettuce downy mildew).